We begin with the raw amino-acid sequence, 600 residues long: Myelin expression factor 2 (600 aa).

The interval 1 to 101 (MADANKAEVP…GEKKGPNRNR (101 aa)) is disordered. Threonine 13 carries the phosphothreonine modification. Residue serine 17 is modified to Phosphoserine. Positions 27 to 42 (GEPRREPHPAEAEKQQ) are enriched in basic and acidic residues. Lysine 53 is covalently cross-linked (Glycyl lysine isopeptide (Lys-Gly) (interchain with G-Cter in SUMO2)). Basic and acidic residues-rich tracts occupy residues 54 to 72 (MEND…EKST) and 83 to 96 (YSKD…EKKG). RRM domains lie at 100–178 (NRVF…EDPD) and 233–310 (STIF…MDDK). Residue arginine 406 is modified to Omega-N-methylarginine. At serine 431 the chain carries Phosphoserine. The 77-residue stretch at 523-599 (NQIFVRNLPF…REIDVRLDRN (77 aa)) folds into the RRM 3 domain.

As to quaternary structure, monomer.

The protein localises to the nucleus. Its function is as follows. Transcriptional repressor of the myelin basic protein gene (MBP). Binds to the proximal MB1 element 5'-TTGTCC-3' of the MBP promoter. Its binding to MB1 and function are inhibited by PURA. The protein is Myelin expression factor 2 (MYEF2) of Homo sapiens (Human).